Consider the following 38-residue polypeptide: Toxin CSTX-16 (38 aa).

Glutamine 19 and glutamine 38 each carry glutamine amide.

This sequence belongs to the cationic peptide 04 (cupiennin) family. 10 (double chain) subfamily. As to expression, expressed by the venom gland.

The protein resides in the secreted. In Cupiennius salei (American wandering spider), this protein is Toxin CSTX-16.